Consider the following 454-residue polypeptide: Ribosomal protein uS12 methylthiotransferase RimO (454 aa).

Residues 19 to 129 (AKVGFVSLGC…VLAQVHEHVA (111 aa)) form the MTTase N-terminal domain. Cys28, Cys64, Cys93, Cys161, Cys165, and Cys168 together coordinate [4Fe-4S] cluster. One can recognise a Radical SAM core domain in the interval 147–384 (LTPKHYAYLK…MAVQAKISSD (238 aa)). In terms of domain architecture, TRAM spans 387 to 453 (QVRIGQEYLI…EHDVWGVRVE (67 aa)).

The protein belongs to the methylthiotransferase family. RimO subfamily. The cofactor is [4Fe-4S] cluster.

It localises to the cytoplasm. It catalyses the reaction L-aspartate(89)-[ribosomal protein uS12]-hydrogen + (sulfur carrier)-SH + AH2 + 2 S-adenosyl-L-methionine = 3-methylsulfanyl-L-aspartate(89)-[ribosomal protein uS12]-hydrogen + (sulfur carrier)-H + 5'-deoxyadenosine + L-methionine + A + S-adenosyl-L-homocysteine + 2 H(+). Functionally, catalyzes the methylthiolation of an aspartic acid residue of ribosomal protein uS12. This is Ribosomal protein uS12 methylthiotransferase RimO from Colwellia psychrerythraea (strain 34H / ATCC BAA-681) (Vibrio psychroerythus).